The primary structure comprises 398 residues: GTPase Obg (398 aa).

The 159-residue stretch at 1-159 (MKFVDEAPIS…RNLKLELKVL (159 aa)) folds into the Obg domain. The disordered stretch occupies residues 128–148 (TRFKSSTNRVPRKTTPGTEGE). The region spanning 160–333 (ADVGMLGLPN…LSGKIMDHLE (174 aa)) is the OBG-type G domain. GTP is bound by residues 166–173 (GLPNAGKS), 191–195 (FTTLV), 213–216 (DIPG), 283–286 (NKID), and 314–316 (SAL). Mg(2+) is bound by residues Ser-173 and Thr-193.

Belongs to the TRAFAC class OBG-HflX-like GTPase superfamily. OBG GTPase family. In terms of assembly, monomer. Mg(2+) is required as a cofactor.

It localises to the cytoplasm. Its function is as follows. An essential GTPase which binds GTP, GDP and possibly (p)ppGpp with moderate affinity, with high nucleotide exchange rates and a fairly low GTP hydrolysis rate. Plays a role in control of the cell cycle, stress response, ribosome biogenesis and in those bacteria that undergo differentiation, in morphogenesis control. This Cellvibrio japonicus (strain Ueda107) (Pseudomonas fluorescens subsp. cellulosa) protein is GTPase Obg.